Here is a 791-residue protein sequence, read N- to C-terminus: Biofilm architecture maintenance protein MbaA (791 aa).

An N-terminal signal peptide occupies residues 1–23 (MKLNHRILLLIAPVILLSAAASS). At 24–259 (YIIYTSQKNA…NAQLHSIQRE (236 aa)) the chain is on the periplasmic side. Residues 260 to 280 (LLLSFGVSALVTVLMLLLLLY) form a helical membrane-spanning segment. The HAMP domain occupies 281-333 (RHVINPILHLDKQLEEVENNQRKNIEKLNTDDEIGRLSSRFYAMYSELHSTYQ). The Cytoplasmic portion of the chain corresponds to 281 to 791 (RHVINPILHL…FTEPSQSECR (511 aa)). A GGDEF domain is found at 368–509 (QHIWVMYIDL…GKNQVAYYSQ (142 aa)). Residues 518 to 769 (RNNIERALRL…EISPWLHASN (252 aa)) enclose the EAL domain.

The protein localises to the cell inner membrane. In terms of biological role, plays an essential role in the maintenance and the formation of the three-dimensional structure of the biofilms at the later stages of their development. Absence of mbaA promotes the accumulation of larger amount of biomass on the surfaces at later stage of development, results in the overproduction of an extracellular polymeric substance that accumulates in the matrix of biofilms. This yields biofilms lacking the typical structure consisting of pillars of cells separated by fluid filled channels. The sequence is that of Biofilm architecture maintenance protein MbaA (mbaA) from Vibrio cholerae serotype O1 (strain ATCC 39315 / El Tor Inaba N16961).